Reading from the N-terminus, the 1295-residue chain is DNA-directed RNA polymerase subunit beta' (1295 aa).

Positions 60, 62, 75, and 78 each coordinate Zn(2+). 3 residues coordinate Mg(2+): Asp516, Asp518, and Asp520. Zn(2+)-binding residues include Cys841, Cys914, Cys921, and Cys924.

This sequence belongs to the RNA polymerase beta' chain family. The RNAP catalytic core consists of 2 alpha, 1 beta, 1 beta' and 1 omega subunit. When a sigma factor is associated with the core the holoenzyme is formed, which can initiate transcription. Requires Mg(2+) as cofactor. Zn(2+) serves as cofactor.

It catalyses the reaction RNA(n) + a ribonucleoside 5'-triphosphate = RNA(n+1) + diphosphate. DNA-dependent RNA polymerase catalyzes the transcription of DNA into RNA using the four ribonucleoside triphosphates as substrates. The sequence is that of DNA-directed RNA polymerase subunit beta' from Dehalococcoides mccartyi (strain CBDB1).